The sequence spans 765 residues: LPS-assembly protein LptD (765 aa).

The N-terminal stretch at 1 to 18 (MQIRYLLALSLLPKLVLA) is a signal peptide.

It belongs to the LptD family. Component of the lipopolysaccharide transport and assembly complex. Interacts with LptE and LptA.

The protein localises to the cell outer membrane. Functionally, together with LptE, is involved in the assembly of lipopolysaccharide (LPS) at the surface of the outer membrane. This chain is LPS-assembly protein LptD, found in Shewanella oneidensis (strain ATCC 700550 / JCM 31522 / CIP 106686 / LMG 19005 / NCIMB 14063 / MR-1).